A 420-amino-acid chain; its full sequence is Succinate--CoA ligase [GDP-forming] subunit beta, mitochondrial (420 aa).

One can recognise an ATP-grasp domain in the interval 35 to 263 (KSLMDKYGVN…NASFRQKEIF (229 aa)). Residues glutamine 46, 78-80 (GRG), and valine 135 contribute to the GTP site. Positions 232 and 246 each coordinate Mg(2+). Residues asparagine 297 and 354–356 (GIM) each bind substrate.

This sequence belongs to the succinate/malate CoA ligase beta subunit family. GTP-specific subunit beta subfamily. As to quaternary structure, heterodimer of an alpha and a beta subunit. The beta subunit determines specificity for GTP. It depends on Mg(2+) as a cofactor.

Its subcellular location is the mitochondrion. It catalyses the reaction GTP + succinate + CoA = succinyl-CoA + GDP + phosphate. It functions in the pathway carbohydrate metabolism; tricarboxylic acid cycle; succinate from succinyl-CoA (ligase route): step 1/1. GTP-specific succinyl-CoA synthetase functions in the citric acid cycle (TCA), coupling the hydrolysis of succinyl-CoA to the synthesis of GTP and thus represents the only step of substrate-level phosphorylation in the TCA. The beta subunit provides nucleotide specificity of the enzyme and binds the substrate succinate, while the binding sites for coenzyme A and phosphate are found in the alpha subunit. The chain is Succinate--CoA ligase [GDP-forming] subunit beta, mitochondrial (scsB) from Dictyostelium discoideum (Social amoeba).